Reading from the N-terminus, the 229-residue chain is uncharacterized protein (229 aa).

This is an uncharacterized protein from Sulfolobus islandicus filamentous virus (isolate Iceland/Hveragerdi) (SIFV).